Reading from the N-terminus, the 429-residue chain is Histidine--tRNA ligase (429 aa).

The protein belongs to the class-II aminoacyl-tRNA synthetase family. As to quaternary structure, homodimer.

The protein resides in the cytoplasm. It carries out the reaction tRNA(His) + L-histidine + ATP = L-histidyl-tRNA(His) + AMP + diphosphate + H(+). This Pelodictyon phaeoclathratiforme (strain DSM 5477 / BU-1) protein is Histidine--tRNA ligase.